A 158-amino-acid polypeptide reads, in one-letter code: Ribosomal RNA large subunit methyltransferase H (158 aa).

S-adenosyl-L-methionine contacts are provided by residues Leu72, Gly103, and 122–127; that span reads LGNLTL.

This sequence belongs to the RNA methyltransferase RlmH family. As to quaternary structure, homodimer.

It localises to the cytoplasm. The catalysed reaction is pseudouridine(1915) in 23S rRNA + S-adenosyl-L-methionine = N(3)-methylpseudouridine(1915) in 23S rRNA + S-adenosyl-L-homocysteine + H(+). In terms of biological role, specifically methylates the pseudouridine at position 1915 (m3Psi1915) in 23S rRNA. The protein is Ribosomal RNA large subunit methyltransferase H of Acidiphilium cryptum (strain JF-5).